A 122-amino-acid polypeptide reads, in one-letter code: Replication factor A protein 3 (122 aa).

The protein belongs to the replication factor A protein 3 family. As to quaternary structure, component of the heterotrimeric canonical replication protein A complex (RPA). Post-translationally, the N-terminus is blocked.

Its subcellular location is the nucleus. As part of the replication protein A (RPA/RP-A), a single-stranded DNA-binding heterotrimeric complex, may play an essential role in DNA replication, recombination and repair. Binds and stabilizes single-stranded DNA intermediates, preventing complementary DNA reannealing and recruiting different proteins involved in DNA metabolism. Stimulates the activity of a cognate strand exchange protein (SEP1). This is Replication factor A protein 3 (RFA3) from Saccharomyces cerevisiae (strain ATCC 204508 / S288c) (Baker's yeast).